The chain runs to 73 residues: Waprin-Phi2 (73 aa).

The N-terminal stretch at 1–21 (MKATLLLLLLFAVILPGTISA) is a signal peptide. The 51-residue stretch at 22-72 (EQEKPGSCPNVDMPIPPLGLCKTTCSKDSDCSETKKCCKNGCGFMTCTTAR) folds into the WAP domain. 4 disulfide bridges follow: Cys29/Cys59, Cys42/Cys63, Cys46/Cys58, and Cys52/Cys68.

It belongs to the venom waprin family. In terms of tissue distribution, expressed by the venom gland.

It localises to the secreted. In terms of biological role, damages membranes of susceptible bacteria. Has no hemolytic activity. Not toxic to mice. Does not inhibit the proteinases elastase and cathepsin G. In Philodryas olfersii (Green snake), this protein is Waprin-Phi2.